A 276-amino-acid polypeptide reads, in one-letter code: 3-methyl-2-oxobutanoate hydroxymethyltransferase (276 aa).

The Mg(2+) site is built by aspartate 45 and aspartate 84. Residues 45-46 (DS), aspartate 84, and lysine 114 contribute to the 3-methyl-2-oxobutanoate site. Glutamate 116 contacts Mg(2+). Glutamate 183 serves as the catalytic Proton acceptor.

The protein belongs to the PanB family. In terms of assembly, homodecamer; pentamer of dimers. Mg(2+) is required as a cofactor.

It is found in the cytoplasm. The enzyme catalyses 3-methyl-2-oxobutanoate + (6R)-5,10-methylene-5,6,7,8-tetrahydrofolate + H2O = 2-dehydropantoate + (6S)-5,6,7,8-tetrahydrofolate. It functions in the pathway cofactor biosynthesis; (R)-pantothenate biosynthesis; (R)-pantoate from 3-methyl-2-oxobutanoate: step 1/2. In terms of biological role, catalyzes the reversible reaction in which hydroxymethyl group from 5,10-methylenetetrahydrofolate is transferred onto alpha-ketoisovalerate to form ketopantoate. This Carboxydothermus hydrogenoformans (strain ATCC BAA-161 / DSM 6008 / Z-2901) protein is 3-methyl-2-oxobutanoate hydroxymethyltransferase.